A 421-amino-acid polypeptide reads, in one-letter code: ATP-dependent RNA helicase eIF4A (421 aa).

Residues 1 to 26 (MSNDKGLEEIPEDQSTTPHKPTSNVG) form a disordered region. Positions 13–26 (DQSTTPHKPTSNVG) are enriched in polar residues. The Q motif motif lies at 48–76 (DSFDAMELKPELLRGVYAYGFERPSAIQQ). The 171-residue stretch at 79–249 (IKPIIKGSDV…TKFMRDPVRI (171 aa)) folds into the Helicase ATP-binding domain. 92–99 (AQSGTGKT) provides a ligand contact to ATP. The DEAD box motif lies at 197 to 200 (DEAD). The 162-residue stretch at 260-421 (GIKQFYIAVE…EMPMNVADLI (162 aa)) folds into the Helicase C-terminal domain.

The protein belongs to the DEAD box helicase family. eIF4A subfamily. In terms of assembly, component of the eIF4F complex, which composition varies with external and internal environmental conditions. It is composed of at least eIF4A, eIF4E and eIF4G.

It localises to the cytoplasm. The catalysed reaction is ATP + H2O = ADP + phosphate + H(+). In terms of biological role, ATP-dependent RNA helicase which is a subunit of the eIF4F complex involved in cap recognition and is required for mRNA binding to ribosome. In the current model of translation initiation, eIF4A unwinds RNA secondary structures in the 5'-UTR of mRNAs which is necessary to allow efficient binding of the small ribosomal subunit, and subsequent scanning for the initiator codon. The protein is ATP-dependent RNA helicase eIF4A (tif1) of Aspergillus oryzae (strain ATCC 42149 / RIB 40) (Yellow koji mold).